A 259-amino-acid polypeptide reads, in one-letter code: Deoxyribose-phosphate aldolase (259 aa).

Asp-104 (proton donor/acceptor) is an active-site residue. Lys-168 functions as the Schiff-base intermediate with acetaldehyde in the catalytic mechanism. Residue Lys-200 is the Proton donor/acceptor of the active site.

The protein belongs to the DeoC/FbaB aldolase family. DeoC type 2 subfamily.

The protein resides in the cytoplasm. It catalyses the reaction 2-deoxy-D-ribose 5-phosphate = D-glyceraldehyde 3-phosphate + acetaldehyde. It participates in carbohydrate degradation; 2-deoxy-D-ribose 1-phosphate degradation; D-glyceraldehyde 3-phosphate and acetaldehyde from 2-deoxy-alpha-D-ribose 1-phosphate: step 2/2. In terms of biological role, catalyzes a reversible aldol reaction between acetaldehyde and D-glyceraldehyde 3-phosphate to generate 2-deoxy-D-ribose 5-phosphate. This chain is Deoxyribose-phosphate aldolase, found in Agrobacterium fabrum (strain C58 / ATCC 33970) (Agrobacterium tumefaciens (strain C58)).